The chain runs to 362 residues: Protein BIG GRAIN 1-like D (362 aa).

Disordered regions lie at residues 22-113 (IDPK…TLFH), 132-168 (KFNRHDENWENTRNRRSVKSSGNQKKPKTPASPGGRI), and 303-327 (VKTNGFEDYEDDDEDDDDDDVASDS). The segment covering 23–47 (DPKTQKTQPYVGSVNTTTKKQSIVT) has biased composition (polar residues). Residues 50-60 (VPDRKIHRDRF) are compositionally biased toward basic and acidic residues. Positions 63–78 (SVSSSSDSNSSIFSSS) are enriched in low complexity. A compositionally biased stretch (basic and acidic residues) spans 132-144 (KFNRHDENWENTR). The segment covering 309–324 (EDYEDDDEDDDDDDVA) has biased composition (acidic residues).

This sequence belongs to the BIG GRAIN 1 (BG1) plant protein family.

It is found in the cell membrane. In terms of biological role, involved in auxin transport. Regulator of the auxin signaling pathway. This chain is Protein BIG GRAIN 1-like D, found in Arabidopsis thaliana (Mouse-ear cress).